A 77-amino-acid chain; its full sequence is Sec-independent protein translocase protein TatA (77 aa).

A helical membrane pass occupies residues 1–21 (MGSFSIWHWLVVLAIVVLVFG). Residues 40–77 (KEGMKGAEEENTQPPPSHQQVTGHSIKSEIEEKDQTKV) form a disordered region. Residues 65–77 (IKSEIEEKDQTKV) are compositionally biased toward basic and acidic residues.

Belongs to the TatA/E family. As to quaternary structure, the Tat system comprises two distinct complexes: a TatABC complex, containing multiple copies of TatA, TatB and TatC subunits, and a separate TatA complex, containing only TatA subunits. Substrates initially bind to the TatABC complex, which probably triggers association of the separate TatA complex to form the active translocon.

The protein localises to the cell inner membrane. Functionally, part of the twin-arginine translocation (Tat) system that transports large folded proteins containing a characteristic twin-arginine motif in their signal peptide across membranes. TatA could form the protein-conducting channel of the Tat system. In Nitrosomonas eutropha (strain DSM 101675 / C91 / Nm57), this protein is Sec-independent protein translocase protein TatA.